The primary structure comprises 94 residues: Integration host factor subunit beta (94 aa).

The protein belongs to the bacterial histone-like protein family. In terms of assembly, heterodimer of an alpha and a beta chain.

Its function is as follows. This protein is one of the two subunits of integration host factor, a specific DNA-binding protein that functions in genetic recombination as well as in transcriptional and translational control. This chain is Integration host factor subunit beta, found in Pectobacterium atrosepticum (strain SCRI 1043 / ATCC BAA-672) (Erwinia carotovora subsp. atroseptica).